Consider the following 375-residue polypeptide: DNA replication and repair protein RecF (375 aa).

34–41 (GDNGAGKT) contacts ATP.

The protein belongs to the RecF family.

It is found in the cytoplasm. In terms of biological role, the RecF protein is involved in DNA metabolism; it is required for DNA replication and normal SOS inducibility. RecF binds preferentially to single-stranded, linear DNA. It also seems to bind ATP. This is DNA replication and repair protein RecF from Rhizobium rhizogenes (strain K84 / ATCC BAA-868) (Agrobacterium radiobacter).